Consider the following 313-residue polypeptide: tRNA dimethylallyltransferase (313 aa).

Glycine 9–serine 16 is an ATP binding site. Threonine 11–serine 16 provides a ligand contact to substrate.

It belongs to the IPP transferase family. Monomer. The cofactor is Mg(2+).

It catalyses the reaction adenosine(37) in tRNA + dimethylallyl diphosphate = N(6)-dimethylallyladenosine(37) in tRNA + diphosphate. Functionally, catalyzes the transfer of a dimethylallyl group onto the adenine at position 37 in tRNAs that read codons beginning with uridine, leading to the formation of N6-(dimethylallyl)adenosine (i(6)A). The chain is tRNA dimethylallyltransferase from Mycobacteroides abscessus (strain ATCC 19977 / DSM 44196 / CCUG 20993 / CIP 104536 / JCM 13569 / NCTC 13031 / TMC 1543 / L948) (Mycobacterium abscessus).